We begin with the raw amino-acid sequence, 226 residues long: 2-C-methyl-D-erythritol 4-phosphate cytidylyltransferase (226 aa).

It belongs to the IspD/TarI cytidylyltransferase family. IspD subfamily.

It carries out the reaction 2-C-methyl-D-erythritol 4-phosphate + CTP + H(+) = 4-CDP-2-C-methyl-D-erythritol + diphosphate. The protein operates within isoprenoid biosynthesis; isopentenyl diphosphate biosynthesis via DXP pathway; isopentenyl diphosphate from 1-deoxy-D-xylulose 5-phosphate: step 2/6. Its function is as follows. Catalyzes the formation of 4-diphosphocytidyl-2-C-methyl-D-erythritol from CTP and 2-C-methyl-D-erythritol 4-phosphate (MEP). This chain is 2-C-methyl-D-erythritol 4-phosphate cytidylyltransferase, found in Prochlorococcus marinus (strain MIT 9312).